Consider the following 107-residue polypeptide: Essential MCU regulator, mitochondrial (107 aa).

The transit peptide at 1-47 (MASGAARWLALVRVGSGASRSWLSLRKGGDVSAGRSCSGQSLVPTRS) directs the protein to the mitochondrion. The Mitochondrial matrix portion of the chain corresponds to 48-65 (VIVTRSGAILPKPVKMSF). The helical transmembrane segment at 66–85 (GLLRVFSIVIPFLYVGTLIS) threads the bilayer. The GXXXX[G/A/S] signature appears at 81 to 85 (GTLIS). Over 86–107 (KNFAALLEEHDIFVPEDDDDDD) the chain is Mitochondrial intermembrane.

Belongs to the SMDT1/EMRE family. Component of the uniplex complex, composed of MCU, EMRE/SMDT1, MICU1 and MICU2 (or MICU3) in a 4:4:1:1 stoichiometry. The number of EMRE/SMDT1 molecules is hovewer variable, ranging from 1 to 4 copies per uniplex complex, leading to uniplex complexes with distinct gatekeeping profiles. Interacts (via its C-terminal poly-Asp tail) with MCUR1; the interaction is direct. Unprocessed form interacts (via transit peptide) with MAIP1. Undergoes proteolytic degradation in neurons: degraded by AFG3L2 and SPG7 before SMDT1/EMRE assembly with the uniporter complex, limiting the availability of SMDT1/EMRE for MCU assembly and promoting efficient assembly of gatekeeper subunits with MCU.

Its subcellular location is the mitochondrion inner membrane. Its function is as follows. Essential regulatory subunit of the mitochondrial calcium uniporter complex (uniplex), a complex that mediates calcium uptake into mitochondria. Required to bridge the calcium-sensing proteins MICU1 with the calcium-conducting subunit MCU. Acts by mediating activation of MCU and retention of MICU1 to the MCU pore, in order to ensure tight regulation of the uniplex complex and appropriate responses to intracellular calcium signaling. The protein is Essential MCU regulator, mitochondrial of Bos taurus (Bovine).